The following is a 384-amino-acid chain: Carbamoyl phosphate synthase small chain (384 aa).

The segment at 1–193 (MTKPATTPAI…DSHPEIPASE (193 aa)) is CPSase. Ser51, Gly245, and Gly247 together coordinate L-glutamine. One can recognise a Glutamine amidotransferase type-1 domain in the interval 197–384 (HVVAYDYGVK…ISAMAPVVDR (188 aa)). Residue Cys273 is the Nucleophile of the active site. 5 residues coordinate L-glutamine: Leu274, Gln277, Asn315, Gly317, and Phe318. Residues His357 and Glu359 contribute to the active site.

Belongs to the CarA family. As to quaternary structure, composed of two chains; the small (or glutamine) chain promotes the hydrolysis of glutamine to ammonia, which is used by the large (or ammonia) chain to synthesize carbamoyl phosphate. Tetramer of heterodimers (alpha,beta)4.

The catalysed reaction is hydrogencarbonate + L-glutamine + 2 ATP + H2O = carbamoyl phosphate + L-glutamate + 2 ADP + phosphate + 2 H(+). It carries out the reaction L-glutamine + H2O = L-glutamate + NH4(+). It participates in amino-acid biosynthesis; L-arginine biosynthesis; carbamoyl phosphate from bicarbonate: step 1/1. It functions in the pathway pyrimidine metabolism; UMP biosynthesis via de novo pathway; (S)-dihydroorotate from bicarbonate: step 1/3. In terms of biological role, small subunit of the glutamine-dependent carbamoyl phosphate synthetase (CPSase). CPSase catalyzes the formation of carbamoyl phosphate from the ammonia moiety of glutamine, carbonate, and phosphate donated by ATP, constituting the first step of 2 biosynthetic pathways, one leading to arginine and/or urea and the other to pyrimidine nucleotides. The small subunit (glutamine amidotransferase) binds and cleaves glutamine to supply the large subunit with the substrate ammonia. The polypeptide is Carbamoyl phosphate synthase small chain (Stutzerimonas stutzeri (Pseudomonas stutzeri)).